The sequence spans 123 residues: Small ribosomal subunit protein uS12 (123 aa).

The tract at residues 1 to 26 (MPTINQLVRKPRKSRSSLNKAPALQH) is disordered. 3-methylthioaspartic acid is present on aspartate 90.

The protein belongs to the universal ribosomal protein uS12 family. In terms of assembly, part of the 30S ribosomal subunit. Contacts proteins S8 and S17. May interact with IF1 in the 30S initiation complex.

In terms of biological role, with S4 and S5 plays an important role in translational accuracy. Its function is as follows. Interacts with and stabilizes bases of the 16S rRNA that are involved in tRNA selection in the A site and with the mRNA backbone. Located at the interface of the 30S and 50S subunits, it traverses the body of the 30S subunit contacting proteins on the other side and probably holding the rRNA structure together. The combined cluster of proteins S8, S12 and S17 appears to hold together the shoulder and platform of the 30S subunit. In Ehrlichia chaffeensis (strain ATCC CRL-10679 / Arkansas), this protein is Small ribosomal subunit protein uS12.